Here is a 196-residue protein sequence, read N- to C-terminus: NADH-quinone oxidoreductase subunit I (196 aa).

4Fe-4S ferredoxin-type domains lie at 54–84 and 104–133; these read LNRW…VEGA and RVYQ…MTNE. [4Fe-4S] cluster contacts are provided by cysteine 64, cysteine 67, cysteine 70, cysteine 74, cysteine 113, cysteine 116, cysteine 119, and cysteine 123.

This sequence belongs to the complex I 23 kDa subunit family. NDH-1 is composed of 14 different subunits. Subunits NuoA, H, J, K, L, M, N constitute the membrane sector of the complex. It depends on [4Fe-4S] cluster as a cofactor.

It is found in the cell membrane. It catalyses the reaction a quinone + NADH + 5 H(+)(in) = a quinol + NAD(+) + 4 H(+)(out). Its function is as follows. NDH-1 shuttles electrons from NADH, via FMN and iron-sulfur (Fe-S) centers, to quinones in the respiratory chain. The immediate electron acceptor for the enzyme in this species is believed to be ubiquinone. Couples the redox reaction to proton translocation (for every two electrons transferred, four hydrogen ions are translocated across the cytoplasmic membrane), and thus conserves the redox energy in a proton gradient. This chain is NADH-quinone oxidoreductase subunit I, found in Nocardioides sp. (strain ATCC BAA-499 / JS614).